An 85-amino-acid polypeptide reads, in one-letter code: Large ribosomal subunit protein bL27 (85 aa).

Residues 1–22 (MAHKKAGGSTKNGRDSESKRLG) are disordered.

It belongs to the bacterial ribosomal protein bL27 family.

This chain is Large ribosomal subunit protein bL27, found in Alteromonas mediterranea (strain DSM 17117 / CIP 110805 / LMG 28347 / Deep ecotype).